A 602-amino-acid polypeptide reads, in one-letter code: Phosphoenolpyruvate carboxykinase [GTP] (602 aa).

Substrate-binding positions include Arg89 and 211 to 213; that span reads YAG. The Mn(2+) site is built by Lys220 and His239. Ser260 is a binding site for substrate. Residue 261-266 participates in GTP binding; it reads GSGKTS. The active site involves Ser262. Asp277 is a Mn(2+) binding site. 367–369 is a binding site for substrate; sequence NAR. Residues Arg369 and Arg400 each contribute to the GTP site.

It belongs to the phosphoenolpyruvate carboxykinase [GTP] family. The cofactor is Mn(2+).

It is found in the cytoplasm. The catalysed reaction is oxaloacetate + GTP = phosphoenolpyruvate + GDP + CO2. It participates in carbohydrate biosynthesis; gluconeogenesis. In terms of biological role, catalyzes the conversion of oxaloacetate (OAA) to phosphoenolpyruvate (PEP), the rate-limiting step in the metabolic pathway that produces glucose from lactate and other precursors derived from the citric acid cycle. The sequence is that of Phosphoenolpyruvate carboxykinase [GTP] from Sulfurisphaera tokodaii (strain DSM 16993 / JCM 10545 / NBRC 100140 / 7) (Sulfolobus tokodaii).